Consider the following 350-residue polypeptide: Biotin synthase (350 aa).

Residues 54–278 (REIQLSTLLS…TMPQSYVRLS (225 aa)) enclose the Radical SAM core domain. 3 residues coordinate [4Fe-4S] cluster: C69, C73, and C76. [2Fe-2S] cluster-binding residues include C113, C144, C204, and R276.

The protein belongs to the radical SAM superfamily. Biotin synthase family. As to quaternary structure, homodimer. [4Fe-4S] cluster is required as a cofactor. The cofactor is [2Fe-2S] cluster.

It carries out the reaction (4R,5S)-dethiobiotin + (sulfur carrier)-SH + 2 reduced [2Fe-2S]-[ferredoxin] + 2 S-adenosyl-L-methionine = (sulfur carrier)-H + biotin + 2 5'-deoxyadenosine + 2 L-methionine + 2 oxidized [2Fe-2S]-[ferredoxin]. The protein operates within cofactor biosynthesis; biotin biosynthesis; biotin from 7,8-diaminononanoate: step 2/2. Its function is as follows. Catalyzes the conversion of dethiobiotin (DTB) to biotin by the insertion of a sulfur atom into dethiobiotin via a radical-based mechanism. The sequence is that of Biotin synthase from Neisseria meningitidis serogroup C / serotype 2a (strain ATCC 700532 / DSM 15464 / FAM18).